The following is a 190-amino-acid chain: Peptidyl-prolyl cis-trans isomerase A (190 aa).

The N-terminal stretch at 1–24 (MLKSTLAAVAAVFALSALSPAALA) is a signal peptide. Residues 27-188 (GDPHVLLTTS…KPVVILSAKV (162 aa)) form the PPIase cyclophilin-type domain.

It belongs to the cyclophilin-type PPIase family.

The protein localises to the periplasm. It catalyses the reaction [protein]-peptidylproline (omega=180) = [protein]-peptidylproline (omega=0). Functionally, PPIases accelerate the folding of proteins. It catalyzes the cis-trans isomerization of proline imidic peptide bonds in oligopeptides. This is Peptidyl-prolyl cis-trans isomerase A (ppiA) from Salmonella typhimurium (strain LT2 / SGSC1412 / ATCC 700720).